The following is a 139-amino-acid chain: D-ribose pyranase (139 aa).

Catalysis depends on His-20, which acts as the Proton donor. Residues Asp-28, His-106, and 128–130 each bind substrate; that span reads YAN.

This sequence belongs to the RbsD / FucU family. RbsD subfamily. As to quaternary structure, homodecamer.

The protein resides in the cytoplasm. It catalyses the reaction beta-D-ribopyranose = beta-D-ribofuranose. It functions in the pathway carbohydrate metabolism; D-ribose degradation; D-ribose 5-phosphate from beta-D-ribopyranose: step 1/2. Functionally, catalyzes the interconversion of beta-pyran and beta-furan forms of D-ribose. The sequence is that of D-ribose pyranase from Salmonella choleraesuis (strain SC-B67).